A 789-amino-acid chain; its full sequence is MDAYWRASNYLSVGQIYLLDNPLLSEPLKREHIKPRLLGHWGTSPGLNMLYVHLNRVIKRDDLEMMYVIGPGHGGPSLVAHAYLEGTYSEVYPDISQDAEGLRKLFKQFSFPGGIPSHVAPETPGSIHEGGELGYALSHAYGAAFDNPELIVACVVGDGEAETGPLATGWHGNKFLNPARDGCVLPILHLNGYKIANPCFLARIPREELQKFFEGMGYAPLFVEGHDPADVHQQLAAALDTALADIRRIQTDARVNGNLKRPAWPMIVFRTPKGWTCPAEIDGKKCEDYWRSHQVPMGDMDKPEHIRILEGWMKSYRPEELFDGDGRLTAELAALAPTGRRRMSDNPHANGGLLLRDLKMPDFRDYAVAVQSPGAATAESARVMGSYLRDVMKLNLKSGNFRLFSPDENNSNRWQDVLEVTDRCFMADIYPEDDHLSPDGRLMEVLSEHQSQGWLEGYLLTGRHGFFSCYEAFIHIIDSMFNQHAKWLKVCNEIPWRRPIASLNYFLSSHVWRQDHNGFSHQDPGFIDHVVNKKADIIRVYLPPDANTLLSVTDHCLRSRNYINVVVAGKQPSPQWLTMDQAVKHCTEGLGIWEWASNDKGCEPDVVMACCGDVPTLETLAAVQLLREHLPELKVRVINVVNLMKLQPSGEHPHGLPDRDFDALFTKDKPIIFAFHGYPWLIHRLTYRRTNHANLHVRGYKEEGTTTTPFDMVVLNHLDRFHLVEDVIDRLPQLGARAAYFKQAIHERLIDHRHHIEKYGEDMPVISGWKWGAGSAGKAQGTSTKGDNV.

The protein belongs to the XFP family. The cofactor is thiamine diphosphate.

The sequence is that of Probable phosphoketolase 1 from Rhizobium meliloti (strain 1021) (Ensifer meliloti).